We begin with the raw amino-acid sequence, 453 residues long: Aldehyde dehydrogenase, dimeric NADP-preferring (453 aa).

Ser-2 carries the N-acetylserine modification. Residue Lys-178 is modified to N6-acetyllysine. Position 188–193 (188–193 (GNTAVG)) interacts with NAD(+). Lys-194 is modified (N6-acetyllysine). Catalysis depends on residues Glu-210 and Cys-244.

This sequence belongs to the aldehyde dehydrogenase family. As to quaternary structure, homodimer.

Its subcellular location is the cytoplasm. It catalyses the reaction an aldehyde + NAD(+) + H2O = a carboxylate + NADH + 2 H(+). The enzyme catalyses octanal + NAD(+) + H2O = octanoate + NADH + 2 H(+). Its function is as follows. ALDHs play a major role in the detoxification of alcohol-derived acetaldehyde. They are involved in the metabolism of corticosteroids, biogenic amines, neurotransmitters, and lipid peroxidation. Oxidizes medium and long chain aldehydes into non-toxic fatty acids. Preferentially oxidizes aromatic aldehyde substrates. Comprises about 50 percent of corneal epithelial soluble proteins. May play a role in preventing corneal damage caused by ultraviolet light. The chain is Aldehyde dehydrogenase, dimeric NADP-preferring (ALDH3A1) from Canis lupus familiaris (Dog).